The chain runs to 700 residues: Elongation factor G (700 aa).

Residues 10–286 (TKVRNIGIMA…AVIDYLPSPL (277 aa)) form the tr-type G domain. GTP-binding positions include 19-26 (AHIDAGKT), 83-87 (DTPGH), and 137-140 (NKMD).

This sequence belongs to the TRAFAC class translation factor GTPase superfamily. Classic translation factor GTPase family. EF-G/EF-2 subfamily.

It is found in the cytoplasm. Catalyzes the GTP-dependent ribosomal translocation step during translation elongation. During this step, the ribosome changes from the pre-translocational (PRE) to the post-translocational (POST) state as the newly formed A-site-bound peptidyl-tRNA and P-site-bound deacylated tRNA move to the P and E sites, respectively. Catalyzes the coordinated movement of the two tRNA molecules, the mRNA and conformational changes in the ribosome. The chain is Elongation factor G from Kineococcus radiotolerans (strain ATCC BAA-149 / DSM 14245 / SRS30216).